A 226-amino-acid chain; its full sequence is Phosphoribosylformylglycinamidine synthase subunit PurQ (226 aa).

The region spanning 2–226 is the Glutamine amidotransferase type-1 domain; sequence KIAVVVFPGS…LENGRIKVEA (225 aa). C86 acts as the Nucleophile in catalysis. Catalysis depends on residues H195 and E197.

As to quaternary structure, part of the FGAM synthase complex composed of 1 PurL, 1 PurQ and 2 PurS subunits.

It localises to the cytoplasm. The catalysed reaction is N(2)-formyl-N(1)-(5-phospho-beta-D-ribosyl)glycinamide + L-glutamine + ATP + H2O = 2-formamido-N(1)-(5-O-phospho-beta-D-ribosyl)acetamidine + L-glutamate + ADP + phosphate + H(+). It catalyses the reaction L-glutamine + H2O = L-glutamate + NH4(+). The protein operates within purine metabolism; IMP biosynthesis via de novo pathway; 5-amino-1-(5-phospho-D-ribosyl)imidazole from N(2)-formyl-N(1)-(5-phospho-D-ribosyl)glycinamide: step 1/2. Part of the phosphoribosylformylglycinamidine synthase complex involved in the purines biosynthetic pathway. Catalyzes the ATP-dependent conversion of formylglycinamide ribonucleotide (FGAR) and glutamine to yield formylglycinamidine ribonucleotide (FGAM) and glutamate. The FGAM synthase complex is composed of three subunits. PurQ produces an ammonia molecule by converting glutamine to glutamate. PurL transfers the ammonia molecule to FGAR to form FGAM in an ATP-dependent manner. PurS interacts with PurQ and PurL and is thought to assist in the transfer of the ammonia molecule from PurQ to PurL. The protein is Phosphoribosylformylglycinamidine synthase subunit PurQ of Limosilactobacillus reuteri (strain DSM 20016) (Lactobacillus reuteri).